The sequence spans 464 residues: Protein FAM90A18 (464 aa).

Disordered stretches follow at residues 1–42 (MMAR…DPRL), 70–387 (PATL…ASHD), and 415–437 (HSPE…SEAP). Basic and acidic residues-rich tracts occupy residues 74 to 89 (GKKE…KPRV) and 97 to 114 (NKDK…DPQR). The span at 180-197 (LASLSPLRKASLSSSSSL) shows a compositional bias: low complexity.

The protein belongs to the FAM90 family.

This Homo sapiens (Human) protein is Protein FAM90A18.